The sequence spans 103 residues: Small ribosomal subunit protein uS10 (103 aa).

Belongs to the universal ribosomal protein uS10 family. In terms of assembly, part of the 30S ribosomal subunit.

In terms of biological role, involved in the binding of tRNA to the ribosomes. The polypeptide is Small ribosomal subunit protein uS10 (Verminephrobacter eiseniae (strain EF01-2)).